The primary structure comprises 206 residues: uncharacterized protein (206 aa).

The region spanning 29–169 (YWHSTFHCWV…DGVFAEGFIV (141 aa)) is the Nudix hydrolase domain. The short motif at 69-90 (AGHIKSGESIEDGVRELKEELG) is the Nudix box element. Mg(2+) contacts are provided by E84 and E88.

The protein belongs to the Nudix hydrolase family. Requires Mg(2+) as cofactor.

This is an uncharacterized protein from Clostridium acetobutylicum (strain ATCC 824 / DSM 792 / JCM 1419 / IAM 19013 / LMG 5710 / NBRC 13948 / NRRL B-527 / VKM B-1787 / 2291 / W).